Here is a 266-residue protein sequence, read N- to C-terminus: Diphthine synthase (266 aa).

S-adenosyl-L-methionine-binding positions include leucine 9, aspartate 85, isoleucine 88, 113-114 (TA), leucine 168, alanine 210, and histidine 235.

The protein belongs to the diphthine synthase family. In terms of assembly, homodimer.

It catalyses the reaction 2-[(3S)-amino-3-carboxypropyl]-L-histidyl-[translation elongation factor 2] + 3 S-adenosyl-L-methionine = diphthine-[translation elongation factor 2] + 3 S-adenosyl-L-homocysteine + 3 H(+). It functions in the pathway protein modification; peptidyl-diphthamide biosynthesis. Its function is as follows. S-adenosyl-L-methionine-dependent methyltransferase that catalyzes the trimethylation of the amino group of the modified target histidine residue in translation elongation factor 2 (EF-2), to form an intermediate called diphthine. The three successive methylation reactions represent the second step of diphthamide biosynthesis. The sequence is that of Diphthine synthase from Natronomonas pharaonis (strain ATCC 35678 / DSM 2160 / CIP 103997 / JCM 8858 / NBRC 14720 / NCIMB 2260 / Gabara) (Halobacterium pharaonis).